A 557-amino-acid polypeptide reads, in one-letter code: Urocanate hydratase (557 aa).

NAD(+)-binding positions include 52–53 (GG), Gln-130, 176–178 (GMG), Glu-196, 242–243 (NA), 263–267 (QTSAH), 273–274 (YL), and Tyr-322. Cys-410 is an active-site residue. Gly-492 is an NAD(+) binding site.

It belongs to the urocanase family. It depends on NAD(+) as a cofactor.

It localises to the cytoplasm. It carries out the reaction 4-imidazolone-5-propanoate = trans-urocanate + H2O. It functions in the pathway amino-acid degradation; L-histidine degradation into L-glutamate; N-formimidoyl-L-glutamate from L-histidine: step 2/3. Catalyzes the conversion of urocanate to 4-imidazolone-5-propionate. In Rhizobium meliloti (strain 1021) (Ensifer meliloti), this protein is Urocanate hydratase.